The sequence spans 425 residues: (S)-6-hydroxynicotine oxidase (425 aa).

Residues Ser12, Glu31, 38 to 39 (GR), and 56 to 59 (GGAY) contribute to the FAD site. (S)-6-hydroxynicotine is bound at residue Asn166. Val226 is an FAD binding site. (S)-6-hydroxynicotine-binding residues include Tyr311, Phe326, and Trp371. FAD is bound by residues Ser398 and 406–408 (GYI). Tyr407 is a (S)-6-hydroxynicotine binding site.

The protein belongs to the flavin monoamine oxidase family. Homodimer. Requires FAD as cofactor.

It is found in the cytoplasm. It carries out the reaction (S)-6-hydroxynicotine + O2 + H2O = 6-hydroxypseudooxynicotine + H2O2. The catalysed reaction is (S)-6-hydroxynicotine + O2 = 6-hydroxy-N-methylmyosmine + H2O2. It functions in the pathway alkaloid degradation; nicotine degradation; 6-hydroxypseudooxynicotine from nicotine (S-isomer route): step 2/2. Inhibited by (R)-6-hydroxynicotine. Inhibited by high concentrations of phenanthroline. Activity is strongly affected by Hg(2+) and p-chloromercuriphenylsulfonate, but not by N-ethylmaleimide and 5,5'-dithiobis-(2-nitrobenzoate). Its function is as follows. Involved in the degradation of L-nicotine. Catalyzes the oxidation of (S)-6-hydroxynicotine (6-hydroxy-L-nicotine) to 6-hydroxypseudooxynicotine. Oxidation of the pyrrolidine ring of (S)-6-hydroxynicotine leads to the formation of the optically inactive 6-hydroxy-N-methylmyosmine, which hydrolyzes spontaneously to 6-hydroxypseudooxynicotine. Acts with absolute stereospecificity on the L-form of 6-hydroxynicotine. Can also use (S)-6-hydroxynornicotine. This is (S)-6-hydroxynicotine oxidase from Paenarthrobacter nicotinovorans (Arthrobacter nicotinovorans).